Here is a 159-residue protein sequence, read N- to C-terminus: MNIKIITVGKLKEKYLKAGIAEYAKRLSKFCKFEIIEVSDEKAPESLSEAEMTTVKDKEGERILAKVKDKEHVIVLAIHGKQRASEEFAKEIQDLATYGTSDITFIIGGSLGTSDAVNKRANDALSFGKLTLPHQLMRLVLTEQIYRAFMINQGSPYHK.

S-adenosyl-L-methionine-binding positions include leucine 76, glycine 108, and 127–132 (FGKLTL).

The protein belongs to the RNA methyltransferase RlmH family. Homodimer.

The protein localises to the cytoplasm. It carries out the reaction pseudouridine(1915) in 23S rRNA + S-adenosyl-L-methionine = N(3)-methylpseudouridine(1915) in 23S rRNA + S-adenosyl-L-homocysteine + H(+). In terms of biological role, specifically methylates the pseudouridine at position 1915 (m3Psi1915) in 23S rRNA. The sequence is that of Ribosomal RNA large subunit methyltransferase H from Latilactobacillus sakei subsp. sakei (strain 23K) (Lactobacillus sakei subsp. sakei).